Reading from the N-terminus, the 179-residue chain is Large ribosomal subunit protein uL6 (179 aa).

The protein belongs to the universal ribosomal protein uL6 family. In terms of assembly, part of the 50S ribosomal subunit.

Its function is as follows. This protein binds to the 23S rRNA, and is important in its secondary structure. It is located near the subunit interface in the base of the L7/L12 stalk, and near the tRNA binding site of the peptidyltransferase center. The chain is Large ribosomal subunit protein uL6 from Pelobacter propionicus (strain DSM 2379 / NBRC 103807 / OttBd1).